Consider the following 196-residue polypeptide: Nucleotide kinase gp1.7 (196 aa).

A disordered region spans residues 97 to 118; sequence PRKPHLNKPEVTPTDDQPSAET.

Dodecamer.

It carries out the reaction dGMP + ATP = dGDP + ADP. The enzyme catalyses dTMP + ATP = dTDP + ADP. In terms of biological role, nucleotide kinase that catalyzes the phosphorylation of dGMP and dTMP to dGDP and dTDP. A double mutation in this protein and the RecBCD inhibitor gp5.9 protein allow phage to overcome the retron Ec48 bacteriophage defense system. This protein alone when overexpressed in E.coli does not cause growth arrest; Y128C may be a silent mutation. This is Nucleotide kinase gp1.7 from Escherichia coli (Bacteriophage T7).